Consider the following 396-residue polypeptide: Elongation factor Tu (396 aa).

One can recognise a tr-type G domain in the interval 11-205 (KPHVNIGTIG…VVDEYIPTPE (195 aa)). The segment at 20–27 (GHVDHGKT) is G1. A GTP-binding site is contributed by 20–27 (GHVDHGKT). Thr27 is a Mg(2+) binding site. A G2 region spans residues 61 to 65 (GITIN). The G3 stretch occupies residues 82 to 85 (DAPG). GTP is bound by residues 82 to 86 (DAPGH) and 137 to 140 (NKCD). The segment at 137–140 (NKCD) is G4. Residues 175 to 177 (SAL) form a G5 region.

The protein belongs to the TRAFAC class translation factor GTPase superfamily. Classic translation factor GTPase family. EF-Tu/EF-1A subfamily. In terms of assembly, monomer.

The protein localises to the cytoplasm. It carries out the reaction GTP + H2O = GDP + phosphate + H(+). GTP hydrolase that promotes the GTP-dependent binding of aminoacyl-tRNA to the A-site of ribosomes during protein biosynthesis. In Lactobacillus delbrueckii subsp. bulgaricus (strain ATCC 11842 / DSM 20081 / BCRC 10696 / JCM 1002 / NBRC 13953 / NCIMB 11778 / NCTC 12712 / WDCM 00102 / Lb 14), this protein is Elongation factor Tu.